We begin with the raw amino-acid sequence, 127 residues long: Small ribosomal subunit protein uS13 (127 aa).

The disordered stretch occupies residues 93-127; the sequence is RQGLPVRGQRTRTNGRTRRGRRVTVAGKKKAPAKK. Over residues 101-127 the composition is skewed to basic residues; it reads QRTRTNGRTRRGRRVTVAGKKKAPAKK.

The protein belongs to the universal ribosomal protein uS13 family. Part of the 30S ribosomal subunit. Forms a loose heterodimer with protein S19. Forms two bridges to the 50S subunit in the 70S ribosome.

Its function is as follows. Located at the top of the head of the 30S subunit, it contacts several helices of the 16S rRNA. In the 70S ribosome it contacts the 23S rRNA (bridge B1a) and protein L5 of the 50S subunit (bridge B1b), connecting the 2 subunits; these bridges are implicated in subunit movement. Contacts the tRNAs in the A and P-sites. The protein is Small ribosomal subunit protein uS13 of Crocosphaera subtropica (strain ATCC 51142 / BH68) (Cyanothece sp. (strain ATCC 51142)).